The chain runs to 183 residues: Inner membrane-spanning protein YciB (183 aa).

Transmembrane regions (helical) follow at residues 4–24, 50–70, 72–92, 119–139, and 149–169; these read FIEF…DIYM, MQLF…FFHD, TFIK…LLIS, VNLG…YVAF, and FKVF…GVYL.

The protein belongs to the YciB family.

The protein localises to the cell inner membrane. Its function is as follows. Plays a role in cell envelope biogenesis, maintenance of cell envelope integrity and membrane homeostasis. The polypeptide is Inner membrane-spanning protein YciB (Aeromonas hydrophila subsp. hydrophila (strain ATCC 7966 / DSM 30187 / BCRC 13018 / CCUG 14551 / JCM 1027 / KCTC 2358 / NCIMB 9240 / NCTC 8049)).